The following is a 126-amino-acid chain: Aspartate 1-decarboxylase (126 aa).

The active-site Schiff-base intermediate with substrate; via pyruvic acid is Ser-25. Ser-25 carries the post-translational modification Pyruvic acid (Ser). Substrate is bound at residue Thr-57. Tyr-58 functions as the Proton donor in the catalytic mechanism. 73–75 (GAA) is a substrate binding site.

It belongs to the PanD family. Heterooctamer of four alpha and four beta subunits. Pyruvate is required as a cofactor. Is synthesized initially as an inactive proenzyme, which is activated by self-cleavage at a specific serine bond to produce a beta-subunit with a hydroxyl group at its C-terminus and an alpha-subunit with a pyruvoyl group at its N-terminus.

Its subcellular location is the cytoplasm. It carries out the reaction L-aspartate + H(+) = beta-alanine + CO2. It participates in cofactor biosynthesis; (R)-pantothenate biosynthesis; beta-alanine from L-aspartate: step 1/1. In terms of biological role, catalyzes the pyruvoyl-dependent decarboxylation of aspartate to produce beta-alanine. The sequence is that of Aspartate 1-decarboxylase from Salmonella arizonae (strain ATCC BAA-731 / CDC346-86 / RSK2980).